The primary structure comprises 105 residues: Large ribosomal subunit protein eL36 (105 aa).

It belongs to the eukaryotic ribosomal protein eL36 family. Component of the large ribosomal subunit.

It is found in the cytoplasm. The protein localises to the cytosol. Its function is as follows. Component of the large ribosomal subunit. The ribosome is a large ribonucleoprotein complex responsible for the synthesis of proteins in the cell. The sequence is that of Large ribosomal subunit protein eL36 (RPL36) from Gallus gallus (Chicken).